We begin with the raw amino-acid sequence, 152 residues long: Putative polyketide cyclase (152 aa).

It to polyketide cyclases.

The protein operates within antibiotic biosynthesis; curamycin biosynthesis. The protein is Putative polyketide cyclase (curF) of Streptomyces cyaneus (Streptomyces curacoi).